Reading from the N-terminus, the 588-residue chain is L-fucose isomerase (588 aa).

Catalysis depends on proton acceptor residues Glu-335 and Asp-359. Mn(2+) contacts are provided by Glu-335, Asp-359, and His-525.

This sequence belongs to the L-fucose isomerase family. Requires Mn(2+) as cofactor.

It is found in the cytoplasm. It carries out the reaction L-fucose = L-fuculose. The protein operates within carbohydrate degradation; L-fucose degradation; L-lactaldehyde and glycerone phosphate from L-fucose: step 1/3. Functionally, converts the aldose L-fucose into the corresponding ketose L-fuculose. In Streptococcus pneumoniae (strain Taiwan19F-14), this protein is L-fucose isomerase.